The following is a 181-amino-acid chain: BURP domain-containing protein 7 (181 aa).

A signal peptide spans 1 to 21; the sequence is MARSLAALLLLLVAAAGDSHA. The BURP domain occupies 65 to 181; sequence FFLEKDLFPG…RRGRRTGWRP (117 aa). The segment at 112 to 181 is disordered; it reads QLSVPAGSPA…RRGRRTGWRP (70 aa). Residues 128–143 show a composition bias toward basic residues; that stretch reads RPRRSPARRSNARRRS. A compositionally biased stretch (low complexity) spans 144–157; that stretch reads SPWWSSPRPASAPA. The span at 170–181 shows a compositional bias: basic residues; the sequence is GRRRGRRTGWRP.

Expressed in roots, stems, leaves and shoot.

The protein is BURP domain-containing protein 7 (BURP7) of Oryza sativa subsp. japonica (Rice).